The chain runs to 635 residues: Chaperone protein HtpG (635 aa).

The interval 1 to 336 is a; substrate-binding; sequence MTTAEAAAPE…SADLPLNLSR (336 aa). The tract at residues 337–556 is b; that stretch reads EMLQDSAILA…ESGIDRRLEK (220 aa). The tract at residues 557-635 is c; the sequence is LLASAGRLGD…RVMQRGLPTA (79 aa).

The protein belongs to the heat shock protein 90 family. As to quaternary structure, homodimer.

Its subcellular location is the cytoplasm. In terms of biological role, molecular chaperone. Has ATPase activity. The sequence is that of Chaperone protein HtpG from Azorhizobium caulinodans (strain ATCC 43989 / DSM 5975 / JCM 20966 / LMG 6465 / NBRC 14845 / NCIMB 13405 / ORS 571).